The primary structure comprises 96 residues: MTTHKAMTRVQLEAMGEVFAVDNLTRMGLRGLHCNWRCRYGECDVIASETAHRTVVSRLRSIAATVMEGSRRSAPEQKVRWLRWLAGLWPANQDEF.

Belongs to the UPF0102 family.

This chain is UPF0102 protein ML1607, found in Mycobacterium leprae (strain TN).